The sequence spans 581 residues: Arginine--tRNA ligase (581 aa).

A 'HIGH' region motif is present at residues 126 to 136 (PNLAKEMHVGH).

Belongs to the class-I aminoacyl-tRNA synthetase family. In terms of assembly, monomer.

It is found in the cytoplasm. The catalysed reaction is tRNA(Arg) + L-arginine + ATP = L-arginyl-tRNA(Arg) + AMP + diphosphate. This is Arginine--tRNA ligase from Shewanella loihica (strain ATCC BAA-1088 / PV-4).